Reading from the N-terminus, the 311-residue chain is HPr kinase/phosphorylase (311 aa).

Residues His138 and Lys159 contribute to the active site. 153 to 160 is an ATP binding site; that stretch reads GDSGIGKS. Ser160 lines the Mg(2+) pocket. The active-site Proton acceptor; for phosphorylation activity. Proton donor; for dephosphorylation activity is Asp177. Residues 201 to 210 are important for the catalytic mechanism of both phosphorylation and dephosphorylation; sequence LEIRGVGIID. Glu202 contributes to the Mg(2+) binding site. Arg243 is an active-site residue. Residues 264 to 269 form an important for the catalytic mechanism of dephosphorylation region; it reads PVKTGR.

It belongs to the HPrK/P family. In terms of assembly, homohexamer. It depends on Mg(2+) as a cofactor.

It carries out the reaction [HPr protein]-L-serine + ATP = [HPr protein]-O-phospho-L-serine + ADP + H(+). The catalysed reaction is [HPr protein]-O-phospho-L-serine + phosphate + H(+) = [HPr protein]-L-serine + diphosphate. Catalyzes the ATP- as well as the pyrophosphate-dependent phosphorylation of a specific serine residue in HPr, a phosphocarrier protein of the phosphoenolpyruvate-dependent sugar phosphotransferase system (PTS). HprK/P also catalyzes the pyrophosphate-producing, inorganic phosphate-dependent dephosphorylation (phosphorolysis) of seryl-phosphorylated HPr (P-Ser-HPr). The two antagonistic activities of HprK/P are regulated by several intracellular metabolites, which change their concentration in response to the absence or presence of rapidly metabolisable carbon sources (glucose, fructose, etc.) in the growth medium. Therefore, by controlling the phosphorylation state of HPr, HPrK/P is a sensor enzyme that plays a major role in the regulation of carbon metabolism and sugar transport: it mediates carbon catabolite repression (CCR), and regulates PTS-catalyzed carbohydrate uptake and inducer exclusion. The chain is HPr kinase/phosphorylase from Streptococcus sanguinis (strain SK36).